Consider the following 268-residue polypeptide: Satratoxin biosynthesis SC1 cluster protein 4 (268 aa).

4 consecutive transmembrane segments (helical) span residues 34–54 (VWLV…VHIF), 78–98 (LFAI…GLAI), 113–133 (HLAG…IKIV), and 145–165 (AVIW…APIY).

This sequence belongs to the SAT4 family.

The protein localises to the membrane. The protein operates within mycotoxin biosynthesis. Its function is as follows. Part of the satratoxin SC1 cluster involved in the biosynthesis of satratoxins, trichothecene mycotoxins that are associated with human food poisonings. Satratoxins are suggested to be made by products of multiple gene clusters (SC1, SC2 and SC3) that encode 21 proteins in all, including polyketide synthases, acetyltransferases, and other enzymes expected to modify the trichothecene skeleton. SC1 encodes 10 proteins, SAT1 to SAT10. The largest are SAT8, which encodes a putative polyketide synthase (PKS) with a conventional non-reducing architecture, and SAT10, a putative protein containing four ankyrin repeats and thus may be involved in protein scaffolding. The putative short-chain reductase SAT3 may assist the PKS in some capacity. SAT6 contains a secretory lipase domain and acts probably as a trichothecene esterase. SAT5 encodes a putative acetyltransferase, and so, with SAT6, may affect endogenous protection from toxicity. The probable transcription factor SAT9 may regulate the expression of the SC1 cluster. SC2 encodes proteins SAT11 to SAT16, the largest of which encodes the putative reducing PKS SAT13. SAT11 is a cytochrome P450 monooxygenase, while SAT14 and SAT16 are probable acetyltransferases. The SC2 cluster may be regulated by the transcription factor SAT15. SC3 is a small cluster that encodes 5 proteins, SAT17 to SAT21. SAT21 is a putative MFS-type transporter which may have a role in exporting secondary metabolites. The four other proteins putatively encoded in SC3 include the taurine hydroxylase-like protein SAT17, the O-methyltransferase SAT18, the acetyltransferase SAT19, and the Cys6-type zinc finger SAT20, the latter being probably involved in regulation of SC3 expression. This Stachybotrys chartarum (strain CBS 109288 / IBT 7711) (Toxic black mold) protein is Satratoxin biosynthesis SC1 cluster protein 4.